The following is a 674-amino-acid chain: YAP1-binding protein 1 (674 aa).

Belongs to the YBP1 family. In terms of assembly, interacts with YAP1. Forms a peroxide stress induced complex with YAP1 in the cytoplasm. Systematic proteome-wide 2-hybrid interaction studies suggest that YAP1, HYR1/GPX3, and YBP1 all interact with the nuclear pore complex subunit NUP116, which is involved in nucleocytoplasmic transport.

It localises to the cytoplasm. Its function is as follows. Involved in oxidative stress response and redox homeostasis. Required for hydrogen peroxide-induced oxidation and nuclear localization (activation) of YAP1. Functions probably in concert with HYP1/GPX3, the actual YAP1 modifying enzyme. YBP1 is not required for HYP1/GPX3-independent, diamide-induced oxidation of YAP1. The sequence is that of YAP1-binding protein 1 from Saccharomyces cerevisiae (strain ATCC 204508 / S288c) (Baker's yeast).